The chain runs to 62 residues: [Ser6, Val10, Asp11]-phyllokinin (62 aa).

The signal sequence occupies residues methionine 1–cysteine 22. Positions glutamate 23–aspartate 51 are excised as a propeptide. The interval glutamate 24 to aspartate 62 is disordered. Positions glutamate 30 to serine 42 are enriched in acidic residues.

It belongs to the frog skin active peptide (FSAP) family. Bradykinin-related peptide subfamily. As to expression, expressed by the skin glands.

It is found in the secreted. Functionally, induces relaxation of rat smooth muscle from tail artery and contraction of that from ileum, urinary bladder and uterus. Binds to both bradykinin receptor B1 (BDKRB1) and B2 (BDKRB2). This Agalychnis spurrelli (Gliding leaf frog) protein is [Ser6, Val10, Asp11]-phyllokinin.